A 729-amino-acid polypeptide reads, in one-letter code: Transcriptional activator ptaB (729 aa).

Positions 1-12 are enriched in pro residues; the sequence is MPQHPGLPPGHP. Disordered stretches follow at residues 1–69, 207–341, 505–538, and 614–729; these read MPQH…QAHA, AAAA…QNQA, LELSEQKQSPKVSKNLGKRAQQKQAQQAAPSLPE, and RGPQ…KGTA. Residues 38–56 show a composition bias toward low complexity; that stretch reads PGGPQVTQGGPMMGMPPGA. Residues 272–285 are compositionally biased toward pro residues; it reads APQPHPTPNPPPQQ. Composition is skewed to low complexity over residues 286 to 300 and 307 to 341; these read LPQAQQPGQQPHQQP and QPQQQQSQQGQPQGQQQQMTPQEAQMKAQQTQNQA. The segment covering 614–625 has biased composition (polar residues); that stretch reads RGPQMNGPNQFA. Residues 655-671 show a composition bias toward low complexity; that stretch reads GPPGMVQQGQMQPNVGQ. Over residues 672 to 682 the composition is skewed to polar residues; that stretch reads ATSASASPQVT.

Belongs to the MFG1 family. Interacts with somA.

It is found in the nucleus. Its function is as follows. Transcriptional regulator that forms a complex with somA to control biofilm formation. The sequence is that of Transcriptional activator ptaB from Aspergillus fumigatus (strain ATCC MYA-4609 / CBS 101355 / FGSC A1100 / Af293) (Neosartorya fumigata).